Here is a 261-residue protein sequence, read N- to C-terminus: Cytochrome c oxidase subunit 3 (261 aa).

Topologically, residues 1–15 (MTHQTHAYHMVNPSP) are mitochondrial matrix. Residues 16–34 (WPLTGALSALLMTSGLAMW) traverse the membrane as a helical segment. Over 35-40 (FHFNST) the chain is Mitochondrial intermembrane. The helical transmembrane segment at 41–66 (LLLALGLLTNILTMYQWWRDIIREST) threads the bilayer. Topologically, residues 67–72 (FQGHHT) are mitochondrial matrix. Residues 73-105 (SIVQKGLRYGMILFIISEVFFFSGFFWAFYHSS) form a helical membrane-spanning segment. The Mitochondrial intermembrane segment spans residues 106-128 (LAPTPELGGCWPPTGIHPLNPLE). The chain crosses the membrane as a helical span at residues 129 to 152 (VPLLNTSVLLASGVSITWAHHSLM). Residues 153-155 (EGN) are Mitochondrial matrix-facing. A helical membrane pass occupies residues 156 to 183 (RKNMLQGLFITISLGVYFTLLQASEYYE). Residues 184–190 (ASFTISD) are Mitochondrial intermembrane-facing. Residues 191–223 (GVYGSTFFVATGFHGLHVIIGSTFLIVCFLRQL) form a helical membrane-spanning segment. The Mitochondrial matrix portion of the chain corresponds to 224–232 (KFHFTSSHH). The chain crosses the membrane as a helical span at residues 233–256 (FGFEAAAWYWHFVDVVWLFLYVSI). Over 257–261 (YWWGS) the chain is Mitochondrial intermembrane.

This sequence belongs to the cytochrome c oxidase subunit 3 family. In terms of assembly, component of the cytochrome c oxidase (complex IV, CIV), a multisubunit enzyme composed of 14 subunits. The complex is composed of a catalytic core of 3 subunits MT-CO1, MT-CO2 and MT-CO3, encoded in the mitochondrial DNA, and 11 supernumerary subunits COX4I, COX5A, COX5B, COX6A, COX6B, COX6C, COX7A, COX7B, COX7C, COX8 and NDUFA4, which are encoded in the nuclear genome. The complex exists as a monomer or a dimer and forms supercomplexes (SCs) in the inner mitochondrial membrane with NADH-ubiquinone oxidoreductase (complex I, CI) and ubiquinol-cytochrome c oxidoreductase (cytochrome b-c1 complex, complex III, CIII), resulting in different assemblies (supercomplex SCI(1)III(2)IV(1) and megacomplex MCI(2)III(2)IV(2)).

The protein resides in the mitochondrion inner membrane. It carries out the reaction 4 Fe(II)-[cytochrome c] + O2 + 8 H(+)(in) = 4 Fe(III)-[cytochrome c] + 2 H2O + 4 H(+)(out). In terms of biological role, component of the cytochrome c oxidase, the last enzyme in the mitochondrial electron transport chain which drives oxidative phosphorylation. The respiratory chain contains 3 multisubunit complexes succinate dehydrogenase (complex II, CII), ubiquinol-cytochrome c oxidoreductase (cytochrome b-c1 complex, complex III, CIII) and cytochrome c oxidase (complex IV, CIV), that cooperate to transfer electrons derived from NADH and succinate to molecular oxygen, creating an electrochemical gradient over the inner membrane that drives transmembrane transport and the ATP synthase. Cytochrome c oxidase is the component of the respiratory chain that catalyzes the reduction of oxygen to water. Electrons originating from reduced cytochrome c in the intermembrane space (IMS) are transferred via the dinuclear copper A center (CU(A)) of subunit 2 and heme A of subunit 1 to the active site in subunit 1, a binuclear center (BNC) formed by heme A3 and copper B (CU(B)). The BNC reduces molecular oxygen to 2 water molecules using 4 electrons from cytochrome c in the IMS and 4 protons from the mitochondrial matrix. In Equus asinus (Donkey), this protein is Cytochrome c oxidase subunit 3 (MT-CO3).